An 844-amino-acid chain; its full sequence is Beta-mannosidase B (844 aa).

The active-site Proton donor is the Glu432. Asn723 carries an N-linked (GlcNAc...) asparagine glycan.

It belongs to the glycosyl hydrolase 2 family. Beta-mannosidase B subfamily.

It catalyses the reaction Hydrolysis of terminal, non-reducing beta-D-mannose residues in beta-D-mannosides.. Its pathway is glycan metabolism; N-glycan degradation. In terms of biological role, exoglycosidase that cleaves the single beta-linked mannose residue from the non-reducing end of beta-mannosidic oligosaccharides of various complexity and length. Prefers mannobiose over mannotriose and has no activity against polymeric mannan. Is also severely restricted by galactosyl substitutions at the +1 subsite. This is Beta-mannosidase B (mndB) from Aspergillus niger (strain ATCC MYA-4892 / CBS 513.88 / FGSC A1513).